Here is a 359-residue protein sequence, read N- to C-terminus: DNA polymerase IV (359 aa).

One can recognise a UmuC domain in the interval 6-186 (IIHVDMDAFY…LPIEAFWGVG (181 aa)). Residues aspartate 10 and aspartate 104 each coordinate Mg(2+). Glutamate 105 is an active-site residue.

The protein belongs to the DNA polymerase type-Y family. As to quaternary structure, monomer. Mg(2+) serves as cofactor.

It is found in the cytoplasm. It catalyses the reaction DNA(n) + a 2'-deoxyribonucleoside 5'-triphosphate = DNA(n+1) + diphosphate. Functionally, poorly processive, error-prone DNA polymerase involved in untargeted mutagenesis. Copies undamaged DNA at stalled replication forks, which arise in vivo from mismatched or misaligned primer ends. These misaligned primers can be extended by PolIV. Exhibits no 3'-5' exonuclease (proofreading) activity. May be involved in translesional synthesis, in conjunction with the beta clamp from PolIII. The protein is DNA polymerase IV of Akkermansia muciniphila (strain ATCC BAA-835 / DSM 22959 / JCM 33894 / BCRC 81048 / CCUG 64013 / CIP 107961 / Muc).